Reading from the N-terminus, the 417-residue chain is MTPRLGTMRLACMFSSILLFGAAGLLLFISLQDPIELSPQQVPGIKFSIRPQQPQHDSHLRISTEKGTRDSPSGSPRGLQLQAPDQPRPHPKAAGSPLRLRQRRRRLLIKKMPAAGTNQGNNSSETFIQPRPRTMDSRWVSLHQTQQERKRVMREACAKYRASSSRRAVTPRHVSRIFVEDRHRVLYCEVPKAGCSNWKRVLMVLAGLASSTADIQHNTVHYGSALKRLDTFDRQGIVHRLSTYTKMLFVREPFERLVSAFRDKFEHPNSYYHPVFGKAILARYRANASREALRTGSGVQFPEFVQYLLDVHRPVGMDIHWDHVSRLCSPCLIDYDFVGKFESMEDDANFFLRLIHAPGNLTFPRFKDRHSEEARTTSRITHQYFAQLSSLQRQRTYDFYYMDYLMFNYSKPFSDLY.

Residues Met-1–Leu-10 lie on the Cytoplasmic side of the membrane. The chain crosses the membrane as a helical; Signal-anchor for type II membrane protein span at residues Ala-11–Leu-31. Over Gln-32–Tyr-417 the chain is Lumenal. The segment at Phe-47 to Arg-101 is disordered. The segment covering His-56–Arg-69 has biased composition (basic and acidic residues). N-linked (GlcNAc...) asparagine glycosylation is found at Asn-121 and Asn-122. 3'-phosphoadenylyl sulfate is bound by residues Pro-191–Asn-197 and Arg-251–Ser-259. N-linked (GlcNAc...) asparagine glycans are attached at residues Asn-287, Asn-360, and Asn-408.

It belongs to the sulfotransferase 2 family. As to expression, strongly expressed in brain. Weakly expressed in lung and kidney. Weakly expressed in pituitary.

Its subcellular location is the golgi apparatus membrane. In terms of biological role, catalyzes the transfer of sulfate to position 4 of non-reducing N-acetylgalactosamine (GalNAc) residues in both N-glycans and O-glycans. Required for biosynthesis of glycoprotein hormones lutropin and thyrotropin, by mediating sulfation of their carbohydrate structures. Only active against terminal GalNAcbeta1,GalNAcbeta. Not active toward chondroitin. This is Carbohydrate sulfotransferase 8 (Chst8) from Mus musculus (Mouse).